A 454-amino-acid polypeptide reads, in one-letter code: Transcription factor bHLH123 (454 aa).

A compositionally biased stretch (low complexity) spans 101–113 (SNANANTTSSTSS). 4 disordered regions span residues 101–127 (SNANANTTSSTSSYQLQESDSSHHHQA), 185–228 (ATTT…QFGS), 270–348 (AAAG…KRKE), and 398–417 (GASLQHQQSDHSTELEVSEE). Polar residues-rich tracts occupy residues 185 to 195 (ATTTTPNSSSG) and 207 to 228 (SSDQQPSRNHQQSSLGYSQFGS). A compositionally biased stretch (basic and acidic residues) spans 303–324 (EQPKNISEIRDSSSNEVKRGGN). A bHLH domain is found at 334–383 (KSEAASPSPAFKRKEKMGDRIAALQQLVSPFGKTDAASVLSEAIEYIKFL).

In terms of assembly, homodimer.

It is found in the nucleus. The sequence is that of Transcription factor bHLH123 (BHLH123) from Arabidopsis thaliana (Mouse-ear cress).